A 1620-amino-acid polypeptide reads, in one-letter code: DNA (cytosine-5)-methyltransferase 1 (1620 aa).

The segment at 1–21 is disordered; it reads MPARTAPARVPALASPAGSLP. The interval 1-120 is interaction with DMAP1; that stretch reads MPARTAPARV…SRPTWRAEMA (120 aa). An interaction with DNMT3A region spans residues 1–145; the sequence is MPARTAPARV…RRSKSDSDTL (145 aa). Interaction with the PRC2/EED-EZH2 complex regions lie at residues 1-343 and 305-609; these read MPAR…SERK and APET…RVMG. S15 is subject to Phosphoserine. The region spanning 16–109 is the DMAP1-binding domain; it reads PAGSLPDHVR…TQKANGCPAN (94 aa). An N6,N6-dimethyllysine; by EHMT2 modification is found at K70. The disordered stretch occupies residues 96–369; sequence THTLTQKANG…PECGQHLDDP (274 aa). Positions 126–137 are enriched in basic residues; it reads PRSRPKPRGPRR. S138 is modified (phosphoserine). Residue K139 is modified to N6-methyllysine; by SETD7. The residue at position 140 (S140) is a Phosphoserine. Over residues 144–155 the composition is skewed to polar residues; sequence TLSVETSPSSVA. S146 is subject to Phosphoserine; by CK1. The tract at residues 147–217 is interaction with DNMT3B; it reads VETSPSSVAT…SGAAAAVEKL (71 aa). Residues S150 and S152 each carry the phosphoserine modification. Residues 161–172 are interaction with PCNA; the sequence is RQTTITAHFTKG. At T164 the chain carries Phosphothreonine. K171 bears the N6-acetyllysine mark. The Nuclear localization signal motif lies at 175-202; it reads KRKPKEESEEGNSAESAAEERDQDKKRR. Residues 192-205 are compositionally biased toward basic and acidic residues; that stretch reads AEERDQDKKRRVVD. At S240 the chain carries Phosphoserine. Basic and acidic residues-rich tracts occupy residues 246 to 267 and 286 to 300; these read RELS…PETH and QPRD…KEAE. K255 carries the N6-acetyllysine; alternate modification. A Glycyl lysine isopeptide (Lys-Gly) (interchain with G-Cter in SUMO2); alternate cross-link involves residue K255. Residues 308–317 are compositionally biased toward acidic residues; sequence TPEDRDEDER. The tract at residues 328 to 556 is DNA replication foci-targeting sequence; that stretch reads KLESHTVPVQ…NVNRFTEDSL (229 aa). Zn(2+)-binding residues include C359 and C362. K372 carries the N6-acetyllysine modification. Residues C420 and H424 each contribute to the Zn(2+) site. 2 positions are modified to phosphoserine: S515 and S555. The CXXC-type zinc-finger motif lies at 649 to 695; it reads NAMKRRRCGVCEVCQQPECGKCKACKDMVKFGGTGRSKQACLKRRCP. Residues C656, C659, C662, C667, C670, C673, C689, and C694 each coordinate Zn(2+). The interval 696–757 is autoinhibitory linker; it reads NLAVKEADDD…TYYQKVSIDE (62 aa). Residues 696–813 form an interaction with HDAC1 region; that stretch reads NLAVKEADDD…TDTVLGATSD (118 aa). The span at 702-713 shows a compositional bias: acidic residues; sequence ADDDEEADDDVS. The disordered stretch occupies residues 702 to 732; that stretch reads ADDDEEADDDVSEMPSPKKLHQGKKKKQNKD. Residues S713 and S717 each carry the phosphoserine modification. Basic residues predominate over residues 719–730; the sequence is KKLHQGKKKKQN. S735 is modified (phosphoserine). The residue at position 752 (K752) is an N6-acetyllysine. Residues 758 to 884 form the BAH 1 domain; that stretch reads EMLEVGDCVS…QEYARFESPP (127 aa). Position 882 is a phosphoserine (S882). N6-acetyllysine is present on residues K895, K961, K965, and K979. The BAH 2 domain occupies 976 to 1103; it reads HYRKYSDYIK…SKTKNFEDPP (128 aa). Residues 1097 to 1136 form a disordered region; that stretch reads KNFEDPPNHARSPGNKGKGKGKGKGKGKHQVSEPKEPEAA. A run of 6 repeats spans residues 1112–1113, 1114–1115, 1116–1117, 1118–1119, 1120–1121, and 1122–1123. The interval 1112–1125 is 7 X 2 AA tandem repeats of K-G; sequence KGKGKGKGKGKGKH. A compositionally biased stretch (basic residues) spans 1113–1125; the sequence is GKGKGKGKGKGKH. N6-acetyllysine is present on residues K1114, K1116, K1118, K1120, K1122, and K1124. A 7; approximate repeat occupies 1124-1125; the sequence is KH. Positions 1124 to 1620 are interaction with the PRC2/EED-EZH2 complex; it reads KHQVSEPKEP…KAKEEAATKD (497 aa). Residues 1126 to 1135 are compositionally biased toward basic and acidic residues; the sequence is QVSEPKEPEA. An SAM-dependent MTase C5-type domain is found at 1142 to 1601; sequence LRTLDVFSGC…LEIKLCLLSS (460 aa). The tract at residues 1142 to 1620 is catalytic; the sequence is LRTLDVFSGC…KAKEEAATKD (479 aa). S-adenosyl-L-methionine is bound by residues S1149, 1153–1154, 1171–1172, and 1193–1194; these read GL, EM, and DC. C1229 is an active-site residue. N6-acetyllysine occurs at positions 1352 and 1418. V1582 is a binding site for S-adenosyl-L-methionine. K1611 participates in a covalent cross-link: Glycyl lysine isopeptide (Lys-Gly) (interchain with G-Cter in SUMO2).

The protein belongs to the class I-like SAM-binding methyltransferase superfamily. C5-methyltransferase family. In terms of assembly, homodimer. Forms a stable complex with E2F1, BB1 and HDAC1. Forms a complex with DMAP1 and HDAC2, with direct interaction. Interacts with the PRC2/EED-EZH2 complex. Probably part of a corepressor complex containing ZNF304, TRIM28, SETDB1 and DNMT1. Interacts with UHRF1; promoting its recruitment to hemimethylated DNA. Interacts with USP7, promoting its deubiquitination. Interacts with BAZ2A/TIP5. Interacts with PCNA. Interacts with MBD2 and MBD3. Interacts with DNMT3A and DNMT3B. Interacts with UBC9. Interacts with HDAC1. Interacts with CSNK1D. Interacts with SIRT7. Interacts with ZNF263; recruited to the SIX3 promoter along with other proteins involved in chromatin modification and transcriptional corepression where it contributes to transcriptional repression. Interacts with L3MBTL3 and DCAF5; the interaction requires DNMT1 methylation at Lys-139 and is necessary to target DNMT1 for ubiquitination by the CRL4-DCAF5 E3 ubiquitin ligase complex and proteasomal degradation. Interacts with PHF20L1; the interaction requires DNMT1 methylation at Lys-139 and protects DNMT1 from ubiquitination and proteasomal degradation. Sumoylated; sumoylation increases activity. In terms of processing, phosphorylation at Ser-146 by CK1 reduces DNA-binding activity. Post-translationally, acetylation on multiple lysines, mainly by KAT2B/PCAF, regulates cell cycle G(2)/M transition. Deacetylation of Lys-1352 and Lys-1418 by SIRT1 increases methyltransferase activity. Phosphorylation of Ser-152 by CDKs is important for enzymatic activity and protein stability. Phosphorylation of Ser-140 by AKT1 prevents methylation by SETD7 thereby increasing DNMT1 stability. In terms of processing, methylation at Lys-139 by SETD7 is necessary for the regulation of DNMT1 proteasomal degradation. Post-translationally, ubiquitinated by UHRF1; interaction with USP7 counteracts ubiquitination by UHRF1 by promoting deubiquitination and preventing degradation by the proteasome. Isoform 1 is expressed in embryonic stem cells and in somatic tissues. Isoform 2 is expressed in oocytes, preimplantation embryos, testis and in skeletal muscle during myogenesis.

The protein localises to the nucleus. The protein resides in the cytoplasm. The catalysed reaction is a 2'-deoxycytidine in DNA + S-adenosyl-L-methionine = a 5-methyl-2'-deoxycytidine in DNA + S-adenosyl-L-homocysteine + H(+). Its activity is regulated as follows. Allosterically regulated. The binding of 5-methylcytosine-containing DNA to the N-terminal parts of DNMT1 causes an allosteric activation of the catalytic domain by a direct interaction of its Zn-binding domain with the catalytic domain. Methylates CpG residues. Preferentially methylates hemimethylated DNA. Associates with DNA replication sites in S phase maintaining the methylation pattern in the newly synthesized strand, that is essential for epigenetic inheritance. Associates with chromatin during G2 and M phases to maintain DNA methylation independently of replication. It is responsible for maintaining methylation patterns established in development. DNA methylation is coordinated with methylation of histones. Mediates transcriptional repression by direct binding to HDAC2. In association with DNMT3B and via the recruitment of CTCFL/BORIS, involved in activation of BAG1 gene expression by modulating dimethylation of promoter histone H3 at H3K4 and H3K9. Probably forms a corepressor complex required for activated KRAS-mediated promoter hypermethylation and transcriptional silencing of tumor suppressor genes (TSGs) or other tumor-related genes in colorectal cancer (CRC) cells. Also required to maintain a transcriptionally repressive state of genes in undifferentiated embryonic stem cells (ESCs). Associates at promoter regions of tumor suppressor genes (TSGs) leading to their gene silencing. Promotes tumor growth. This Mus musculus (Mouse) protein is DNA (cytosine-5)-methyltransferase 1 (Dnmt1).